A 778-amino-acid chain; its full sequence is Acyl-homoserine lactone acylase PvdQ (778 aa).

The N-terminal stretch at 1–25 (MTISRQFTGLTLAGLFLGLSLSAQA) is a signal peptide. Positions 196 to 218 (IENNARAYQLADTRLQRFALDRG) are cleaved as a propeptide — spacer peptide. The active-site Nucleophile is Ser-219.

This sequence belongs to the peptidase S45 family. As to quaternary structure, heterodimer of an alpha subunit and a beta subunit processed from the same precursor.

The protein localises to the periplasm. It catalyses the reaction an N-acyl-L-homoserine lactone + H2O = L-homoserine lactone + a carboxylate. Functionally, catalyzes the deacylation of acyl-homoserine lactone (AHL or acyl-HSL), releasing homoserine lactone (HSL) and the corresponding fatty acid. Possesses a specificity for the degradation of long-chain acyl-HSLs (side chains of 11 to 14 carbons in length). This is Acyl-homoserine lactone acylase PvdQ (pvdQ) from Pseudomonas fluorescens (strain Pf0-1).